The primary structure comprises 299 residues: B-box zinc finger protein 22 (299 aa).

Residues cysteine 5, cysteine 8, cysteine 28, histidine 33, cysteine 57, cysteine 60, cysteine 80, and histidine 85 each contribute to the Zn(2+) site. Residues 5 to 47 (CNVCEAAEATVLCCADEAALCWACDEKIHAANKLAGKHQRVPL) form a B box-type 1; atypical zinc finger. The B box-type 2; atypical zinc-finger motif lies at 57 to 99 (CDICQEASGFFFCLQDRALLCRKCDVAIHTVNPHVSAHQRFLL). Disordered stretches follow at residues 143 to 181 (FDHHHHQQQQEQQEGVIPGTKVNDQTSTKLPLVSSGSTT) and 206 to 299 (ENNG…RRRF). Polar residues-rich tracts occupy residues 164 to 181 (VNDQTSTKLPLVSSGSTT), 251 to 260 (QIQSPPTASG), and 277 to 290 (ITSSTPYTGSSPNQ).

In terms of assembly, interacts with HY5. Post-translationally, ubiquitinated by COP1 in vitro. COP1-mediated degradation of BBX22 by the proteasome occurs in the dark and is important for a precise skotomorphogenesis process and optimization of seedling growth under short days conditions.

The protein resides in the nucleus. Functionally, acts as a positive regulator of seedling photomorphogenesis and light-regulated inhibition of hypocotyl elongation, independently and in concert with HY5 and BBX21. Acts as a positive regulator of de-etiolation and influences chloroplast biogenesis and function through regulation of genes encoding chloroplast proteins. Acts downstream of COP1 and plays an important role in early and long-term adjustment of the shade avoidance syndrome (SAS) responses in natural environments. Regulates the expression of genes responsive to light hormone signals which may contribute to optimal seedling development. The polypeptide is B-box zinc finger protein 22 (Arabidopsis thaliana (Mouse-ear cress)).